A 222-amino-acid polypeptide reads, in one-letter code: Probable septum site-determining protein MinC (222 aa).

The protein belongs to the MinC family. Interacts with MinD and FtsZ.

Functionally, cell division inhibitor that blocks the formation of polar Z ring septums. Rapidly oscillates between the poles of the cell to destabilize FtsZ filaments that have formed before they mature into polar Z rings. Prevents FtsZ polymerization. This chain is Probable septum site-determining protein MinC, found in Lysinibacillus sphaericus (strain C3-41).